Here is a 375-residue protein sequence, read N- to C-terminus: Formate dehydrogenase (375 aa).

Substrate is bound by residues Ile94 and Asn120. NAD(+)-binding positions include 175–176 (RI), Asp196, 231–235 (PLHEK), Thr257, Asp283, 312–315 (HMSG), and Ser358.

It belongs to the D-isomer specific 2-hydroxyacid dehydrogenase family. FDH subfamily. As to quaternary structure, homodimer.

The protein resides in the cytoplasm. The catalysed reaction is formate + NAD(+) = CO2 + NADH. Its function is as follows. Catalyzes the NAD(+)-dependent oxidation of formate to carbon dioxide. Formate oxidation is the final step in the methanol oxidation pathway in methylotrophic microorganisms. Has a role in the detoxification of exogenous formate in non-methylotrophic organisms. This Neurospora crassa (strain ATCC 24698 / 74-OR23-1A / CBS 708.71 / DSM 1257 / FGSC 987) protein is Formate dehydrogenase.